The sequence spans 328 residues: Beta-ketoacyl-[acyl-carrier-protein] synthase III (328 aa).

Catalysis depends on residues Cys122 and His255. The ACP-binding stretch occupies residues 256–260; sequence QANIR. Residue Asn285 is part of the active site.

This sequence belongs to the thiolase-like superfamily. FabH family. As to quaternary structure, homodimer.

The protein resides in the cytoplasm. It catalyses the reaction malonyl-[ACP] + acetyl-CoA + H(+) = 3-oxobutanoyl-[ACP] + CO2 + CoA. The protein operates within lipid metabolism; fatty acid biosynthesis. Catalyzes the condensation reaction of fatty acid synthesis by the addition to an acyl acceptor of two carbons from malonyl-ACP. Catalyzes the first condensation reaction which initiates fatty acid synthesis and may therefore play a role in governing the total rate of fatty acid production. Possesses both acetoacetyl-ACP synthase and acetyl transacylase activities. Its substrate specificity determines the biosynthesis of branched-chain and/or straight-chain of fatty acids. This is Beta-ketoacyl-[acyl-carrier-protein] synthase III from Polynucleobacter necessarius subsp. necessarius (strain STIR1).